We begin with the raw amino-acid sequence, 128 residues long: MTRISRGYIARRRRRKTSLVVSSSGASLSKLITQQEIKALASSDRDRDRQKRDFRCLWITRINSVIREGWVSYSYSYSKFIHDLYKRQLLLNRKILAQIAIANKNFLYLISNQILKSEVNWKESAGVI.

It belongs to the bacterial ribosomal protein bL20 family.

The protein localises to the plastid. It is found in the chloroplast. Functionally, binds directly to 23S ribosomal RNA and is necessary for the in vitro assembly process of the 50S ribosomal subunit. It is not involved in the protein synthesizing functions of that subunit. This chain is Large ribosomal subunit protein bL20c, found in Trachelium caeruleum (Blue throatwort).